The chain runs to 350 residues: Methylthioribose-1-phosphate isomerase (350 aa).

Substrate-binding positions include 47–49 (RGA), R89, and Q196. D237 functions as the Proton donor in the catalytic mechanism. 247–248 (NK) is a substrate binding site.

Belongs to the eIF-2B alpha/beta/delta subunits family. MtnA subfamily.

It carries out the reaction 5-(methylsulfanyl)-alpha-D-ribose 1-phosphate = 5-(methylsulfanyl)-D-ribulose 1-phosphate. It participates in amino-acid biosynthesis; L-methionine biosynthesis via salvage pathway; L-methionine from S-methyl-5-thio-alpha-D-ribose 1-phosphate: step 1/6. In terms of biological role, catalyzes the interconversion of methylthioribose-1-phosphate (MTR-1-P) into methylthioribulose-1-phosphate (MTRu-1-P). This is Methylthioribose-1-phosphate isomerase from Nitratidesulfovibrio vulgaris (strain DSM 19637 / Miyazaki F) (Desulfovibrio vulgaris).